The sequence spans 388 residues: Flap endonuclease 1 (388 aa).

An N-domain region spans residues methionine 1–arginine 105. Aspartate 34 contacts Mg(2+). Arginine 71 is a binding site for DNA. Residues aspartate 87, glutamate 159, glutamate 161, aspartate 180, and aspartate 182 each contribute to the Mg(2+) site. An I-domain region spans residues aspartate 123 to histidine 254. Glutamate 159 is a binding site for DNA. Glycine 232 and aspartate 234 together coordinate DNA. Position 234 (aspartate 234) interacts with Mg(2+). The interval valine 338–phenylalanine 346 is interaction with PCNA. The interval isoleucine 349 to lysine 388 is disordered. Basic residues predominate over residues serine 375–lysine 388.

Belongs to the XPG/RAD2 endonuclease family. FEN1 subfamily. Interacts with PCNA. Three molecules of repG bind to one PCNA trimer with each molecule binding to one PCNA monomer. PCNA stimulates the nuclease activity without altering cleavage specificity. Mg(2+) is required as a cofactor. Phosphorylated. Phosphorylation upon DNA damage induces relocalization to the nuclear plasma.

It is found in the nucleus. The protein resides in the nucleolus. Its subcellular location is the nucleoplasm. The protein localises to the mitochondrion. Structure-specific nuclease with 5'-flap endonuclease and 5'-3' exonuclease activities involved in DNA replication and repair. During DNA replication, cleaves the 5'-overhanging flap structure that is generated by displacement synthesis when DNA polymerase encounters the 5'-end of a downstream Okazaki fragment. It enters the flap from the 5'-end and then tracks to cleave the flap base, leaving a nick for ligation. Also involved in the long patch base excision repair (LP-BER) pathway, by cleaving within the apurinic/apyrimidinic (AP) site-terminated flap. Acts as a genome stabilization factor that prevents flaps from equilibrating into structures that lead to duplications and deletions. Also possesses 5'-3' exonuclease activity on nicked or gapped double-stranded DNA, and exhibits RNase H activity. Also involved in replication and repair of rDNA and in repairing mitochondrial DNA. This is Flap endonuclease 1 from Heterostelium pallidum (strain ATCC 26659 / Pp 5 / PN500) (Cellular slime mold).